We begin with the raw amino-acid sequence, 226 residues long: ATP synthase F(0) complex subunit a (226 aa).

6 helical membrane-spanning segments follow: residues 5–25 (LFAS…LIIL), 68–88 (WSLM…LGLL), 97–117 (QLSM…TTGF), 138–158 (IPML…ALAV), 160–180 (LTAN…ATLA), and 189–209 (TLII…VALI).

The protein belongs to the ATPase A chain family. Component of the ATP synthase complex composed at least of ATP5F1A/subunit alpha, ATP5F1B/subunit beta, ATP5MC1/subunit c (homooctomer), MT-ATP6/subunit a, MT-ATP8/subunit 8, ATP5ME/subunit e, ATP5MF/subunit f, ATP5MG/subunit g, ATP5MK/subunit k, ATP5MJ/subunit j, ATP5F1C/subunit gamma, ATP5F1D/subunit delta, ATP5F1E/subunit epsilon, ATP5PF/subunit F6, ATP5PB/subunit b, ATP5PD/subunit d, ATP5PO/subunit OSCP. ATP synthase complex consists of a soluble F(1) head domain (subunits alpha(3) and beta(3)) - the catalytic core - and a membrane F(0) domain - the membrane proton channel (subunits c, a, 8, e, f, g, k and j). These two domains are linked by a central stalk (subunits gamma, delta, and epsilon) rotating inside the F1 region and a stationary peripheral stalk (subunits F6, b, d, and OSCP). Interacts with DNAJC30; interaction is direct.

The protein localises to the mitochondrion inner membrane. It carries out the reaction H(+)(in) = H(+)(out). Functionally, subunit a, of the mitochondrial membrane ATP synthase complex (F(1)F(0) ATP synthase or Complex V) that produces ATP from ADP in the presence of a proton gradient across the membrane which is generated by electron transport complexes of the respiratory chain. ATP synthase complex consist of a soluble F(1) head domain - the catalytic core - and a membrane F(1) domain - the membrane proton channel. These two domains are linked by a central stalk rotating inside the F(1) region and a stationary peripheral stalk. During catalysis, ATP synthesis in the catalytic domain of F(1) is coupled via a rotary mechanism of the central stalk subunits to proton translocation. With the subunit c (ATP5MC1), forms the proton-conducting channel in the F(0) domain, that contains two crucial half-channels (inlet and outlet) that facilitate proton movement from the mitochondrial intermembrane space (IMS) into the matrix. Protons are taken up via the inlet half-channel and released through the outlet half-channel, following a Grotthuss mechanism. This is ATP synthase F(0) complex subunit a from Gorilla gorilla gorilla (Western lowland gorilla).